A 1015-amino-acid chain; its full sequence is Condensin complex subunit 3 (1015 aa).

HEAT repeat units lie at residues 94 to 131 (GLLN…SMPE), 138 to 173 (DVFD…QDPK), 174 to 212 (DDEC…TLPK), 238 to 275 (MRAM…GWLR), and 276 to 313 (FSEG…LSEL). Position 390 is a phosphoserine (S390). HEAT repeat units follow at residues 399–436 (EFIG…LPTI), 439–478 (SLVS…TVGV), and 617–654 (DFAR…TFGI). At S674 the chain carries Phosphoserine. HEAT repeat units follow at residues 687 to 724 (ATAK…SGLL) and 865 to 907 (KDLL…QAEA). T931 is modified (phosphothreonine). Polar residues predominate over residues 941-950 (ASKSTQLKTN). Residues 941-994 (ASKSTQLKTNRGQRKVTVSARTNRRCQTAEADSESDHEVPEPESEMKMRLPRRA) are disordered. S973, S975, S1002, and S1015 each carry phosphoserine. Residues 974–988 (ESDHEVPEPESEMKM) are compositionally biased toward basic and acidic residues.

It belongs to the CND3 (condensin subunit 3) family. Component of the condensin complex, which contains the SMC2 and SMC4 heterodimer, and three non SMC subunits that probably regulate the complex: NCAPH/BRRN1, NCAPD2/CAPD2 and NCAPG. Post-translationally, phosphorylated by CDK1. Its phosphorylation, as well as that of NCAPD2 and NCAPH subunits, activates the condensin complex and is required for chromosome condensation. In terms of tissue distribution, highly expressed in testis.

It localises to the nucleus. Its subcellular location is the cytoplasm. The protein resides in the chromosome. Its function is as follows. Regulatory subunit of the condensin complex, a complex required for conversion of interphase chromatin into mitotic-like condense chromosomes. The condensin complex probably introduces positive supercoils into relaxed DNA in the presence of type I topoisomerases and converts nicked DNA into positive knotted forms in the presence of type II topoisomerases. This is Condensin complex subunit 3 (NCAPG) from Homo sapiens (Human).